The primary structure comprises 317 residues: Protein IMPACT-B (317 aa).

The region spanning 17 to 118 is the RWD domain; sequence EEIEALSSIY…EKIREFLTEK (102 aa). The interval 296–317 is disordered; that stretch reads DSTEETSKAGGKSKKPKSKKTK. The span at 306-317 shows a compositional bias: basic residues; it reads GKSKKPKSKKTK.

The protein belongs to the IMPACT family. As to quaternary structure, interacts with GCN1; prevents the interaction of GCN1 with EIF2AK4/GCN2 and inhibits EIF2AK4/GCN2 kinase activity. Interaction with RPL39; this interaction occurs in a GCN1-independent manner. Associates with ribosomes; this interaction occurs in a GCN1-independent manner. Associates with actin; this interaction occurs in a GCN1-independent manner.

It localises to the cytoplasm. Its function is as follows. Translational regulator that ensures constant high levels of translation upon a variety of stress conditions, such as amino acid starvation, UV-C irradiation, proteasome inhibitor treatment and glucose deprivation. Plays a role as a negative regulator of the EIF2AK4/GCN2 kinase activity; impairs GCN1-mediated EIF2AK4/GCN2 activation, and hence EIF2AK4/GCN2-mediated eIF-2-alpha phosphorylation and subsequent down-regulation of protein synthesis. Plays a role in differentiation of neuronal cells by stimulating neurite outgrowth. The protein is Protein IMPACT-B (impact-B) of Xenopus tropicalis (Western clawed frog).